We begin with the raw amino-acid sequence, 817 residues long: Collagen-like protein 4 (817 aa).

3 Collagen-like domains span residues 83–142 (GDTG…KGQD), 145–264 (GSKG…KGDD), and 268–327 (GIQG…KGLK). 3 disordered regions span residues 87–107 (NKGEIGDNGENGDIGQIGDNG), 120–458 (FNGS…DKGD), and 479–543 (IIGD…KGDI). 2 N-linked (GlcNAc...) asparagine; by host glycosylation sites follow: Asn106 and Asn121. 2 stretches are compositionally biased toward basic and acidic residues: residues 126-141 (IKGDKGTDGIKGDKGQ) and 149-161 (QKGETGSKGDDGI). N-linked (GlcNAc...) asparagine; by host glycosylation occurs at Asn183. 2 stretches are compositionally biased toward basic and acidic residues: residues 212–224 (IKGDPGNKGEDGI) and 233–245 (SKGETGSKGDDGT). A compositionally biased stretch (low complexity) spans 246–260 (KGITGLKGTKGNSGS). The segment covering 294 to 341 (KGSDGDKGNKGLDGIKGDLGDDGIKGDKGIKGLKGDTGNSDKGDKGSK) has biased composition (basic and acidic residues). 2 N-linked (GlcNAc...) asparagine; by host glycosylation sites follow: Asn345 and Asn360. Collagen-like domains are found at residues 352–411 (GDKG…KGLV) and 430–489 (GDKG…KGIK). Basic and acidic residues-rich tracts occupy residues 354 to 368 (KGSKGDNGSKGESGD), 377 to 390 (SKGDIGDKGEKGDL), and 428 to 458 (SKGDKGESGDKGDIGIKGDKGAKGVTGDKGD). The span at 480–494 (IGDNGSKGIKGSSNN) shows a compositional bias: low complexity. N-linked (GlcNAc...) asparagine; by host glycosylation occurs at Asn483. Basic and acidic residues-rich tracts occupy residues 495-504 (KGDKGDKGNT), 515-525 (IKGDKGIKGSK), and 533-543 (EKGEKGTKGDI). Residues 512–570 (TKGIKGDKGIKGSKGDLGSVGEKGEKGTKGDIGTKGETGLKGIIGDKGELGSKGIKGLS) form the Collagen-like 6 domain. Residues Asn709, Asn712, and Asn715 are each glycosylated (N-linked (GlcNAc...) asparagine; by host). Residues 757–771 (GGGGASAFGNGGRGG) are compositionally biased toward gly residues. A disordered region spans residues 757–804 (GGGGASAFGNGGRGGNTTQAATKGEYGSGGGGGSEFSPSGSTNGGDGG). N-linked (GlcNAc...) asparagine; by host glycosylation is present at Asn772.

May be hydroxylated on lysine by the viral-encoded procollagen-lysine,2-oxoglutarate 5-dioxygenase.

Its subcellular location is the virion. Functionally, may participate in the formation of a layer of cross-linked glycosylated fibrils at the viral surface thus giving it a hairy-like appearance. This is Collagen-like protein 4 from Acanthamoeba polyphaga (Amoeba).